Here is a 162-residue protein sequence, read N- to C-terminus: Precorrin-2 dehydrogenase (162 aa).

NAD(+)-binding positions include Ser20–Ile21 and Pro41–Asp42.

The protein belongs to the precorrin-2 dehydrogenase / sirohydrochlorin ferrochelatase family.

The catalysed reaction is precorrin-2 + NAD(+) = sirohydrochlorin + NADH + 2 H(+). It functions in the pathway cofactor biosynthesis; adenosylcobalamin biosynthesis; sirohydrochlorin from precorrin-2: step 1/1. Its pathway is porphyrin-containing compound metabolism; siroheme biosynthesis; sirohydrochlorin from precorrin-2: step 1/1. Catalyzes the dehydrogenation of precorrin-2 to form sirohydrochlorin which is used as a precursor in both siroheme biosynthesis and in the anaerobic branch of adenosylcobalamin biosynthesis. In Bacillus subtilis (strain 168), this protein is Precorrin-2 dehydrogenase (sirC).